We begin with the raw amino-acid sequence, 42 residues long: MKKKDKGRLTGGVTPQGDLEGNTHNDPKTELEERAKKSNTKR.

Positions 1-42 (MKKKDKGRLTGGVTPQGDLEGNTHNDPKTELEERAKKSNTKR) are disordered. Over residues 21–36 (GNTHNDPKTELEERAK) the composition is skewed to basic and acidic residues.

The protein resides in the spore core. This is Small, acid-soluble spore protein L (sspL) from Bacillus subtilis (strain 168).